Here is a 405-residue protein sequence, read N- to C-terminus: S-adenosylmethionine synthase (405 aa).

An ATP-binding site is contributed by Gly139–Asp144.

It belongs to the AdoMet synthase 2 family. Mg(2+) is required as a cofactor.

The enzyme catalyses L-methionine + ATP + H2O = S-adenosyl-L-methionine + phosphate + diphosphate. The protein operates within amino-acid biosynthesis; S-adenosyl-L-methionine biosynthesis; S-adenosyl-L-methionine from L-methionine: step 1/1. In terms of biological role, catalyzes the formation of S-adenosylmethionine from methionine and ATP. The protein is S-adenosylmethionine synthase of Thermococcus onnurineus (strain NA1).